We begin with the raw amino-acid sequence, 426 residues long: Serine--tRNA ligase (426 aa).

Residues Lys36–Glu66 are disordered. Positions Asp46–Ser55 are enriched in polar residues. An L-serine-binding site is contributed by Thr233–Glu235. Residue Arg264 to Glu266 coordinates ATP. An L-serine-binding site is contributed by Glu287. Glu351–Ser354 contributes to the ATP binding site. Ser387 is an L-serine binding site.

This sequence belongs to the class-II aminoacyl-tRNA synthetase family. Type-1 seryl-tRNA synthetase subfamily. In terms of assembly, homodimer. The tRNA molecule binds across the dimer.

It localises to the cytoplasm. It carries out the reaction tRNA(Ser) + L-serine + ATP = L-seryl-tRNA(Ser) + AMP + diphosphate + H(+). The enzyme catalyses tRNA(Sec) + L-serine + ATP = L-seryl-tRNA(Sec) + AMP + diphosphate + H(+). The protein operates within aminoacyl-tRNA biosynthesis; selenocysteinyl-tRNA(Sec) biosynthesis; L-seryl-tRNA(Sec) from L-serine and tRNA(Sec): step 1/1. Functionally, catalyzes the attachment of serine to tRNA(Ser). Is also able to aminoacylate tRNA(Sec) with serine, to form the misacylated tRNA L-seryl-tRNA(Sec), which will be further converted into selenocysteinyl-tRNA(Sec). The polypeptide is Serine--tRNA ligase (Francisella tularensis subsp. tularensis (strain FSC 198)).